The primary structure comprises 145 residues: Putative phosphatidylglycerol/phosphatidylinositol transfer protein DDB_G0282179 (145 aa).

Positions 1-20 (MIKTILLLLINFMLILIVNG) are cleaved as a signal peptide. N-linked (GlcNAc...) asparagine glycosylation occurs at N134.

The protein belongs to the NPC2 family. Monomer.

Catalyzes the intermembrane transfer of phosphatidylglycerol and phosphatidylinositol. The polypeptide is Putative phosphatidylglycerol/phosphatidylinositol transfer protein DDB_G0282179 (Dictyostelium discoideum (Social amoeba)).